The following is a 304-amino-acid chain: Secreted mono- and diacylglycerol lipase MDL3 (304 aa).

The first 19 residues, methionine 1–glycine 19, serve as a signal peptide directing secretion. A disulfide bridge links cysteine 55 with cysteine 297. A glycan (N-linked (GlcNAc...) asparagine) is linked at asparagine 161. Serine 171 acts as the Nucleophile in catalysis. Active-site residues include aspartate 228 and histidine 281.

This sequence belongs to the AB hydrolase superfamily. Lipase family. Class 3 subfamily.

It localises to the secreted. The protein resides in the cell wall. It carries out the reaction a monoacylglycerol + H2O = glycerol + a fatty acid + H(+). It catalyses the reaction a diacylglycerol + H2O = a monoacylglycerol + a fatty acid + H(+). Its function is as follows. Secreted lipase involved in Dandruff and seborrheic dermatitis (D/SD) probably via lipase-mediated breakdown of sebaceous lipids and release of irritating free fatty acids. Shows activity against monoglyceride and diglyceride substrates, but not triglyceride substrates and does not exhibit regio-selective production of diacylglycerols. Hydrolyzes distearin, dilinolein, dipalmitoylglycerol and dipalmitolein. Cleaves oleic acid from 1,2 isomers of diolein on both the 1 and the 2 position of the glycerol backbone, resulting mainly in free fatty acids but no monoolein is detected. Shows activity on monoolein and liberates mostly free fatty acids, but can also perform the reverse reaction and produce diolein. This chain is Secreted mono- and diacylglycerol lipase MDL3, found in Malassezia globosa (strain ATCC MYA-4612 / CBS 7966) (Dandruff-associated fungus).